The primary structure comprises 124 residues: Seripauperin-17 (124 aa).

Positions 1-20 (MVKLTSIAAGVAAIAAGVAA) are cleaved as a signal peptide.

It belongs to the SRP1/TIP1 family. Seripauperin subfamily.

This chain is Seripauperin-17 (PAU17), found in Saccharomyces cerevisiae (strain ATCC 204508 / S288c) (Baker's yeast).